Reading from the N-terminus, the 293-residue chain is Bis(5'-nucleosyl)-tetraphosphatase, symmetrical (293 aa).

Belongs to the Ap4A hydrolase family.

The catalysed reaction is P(1),P(4)-bis(5'-adenosyl) tetraphosphate + H2O = 2 ADP + 2 H(+). Hydrolyzes diadenosine 5',5'''-P1,P4-tetraphosphate to yield ADP. The polypeptide is Bis(5'-nucleosyl)-tetraphosphatase, symmetrical (Pseudomonas fluorescens (strain Pf0-1)).